The primary structure comprises 466 residues: Asparagine--tRNA ligase (466 aa).

This sequence belongs to the class-II aminoacyl-tRNA synthetase family. In terms of assembly, homodimer.

The protein resides in the cytoplasm. The catalysed reaction is tRNA(Asn) + L-asparagine + ATP = L-asparaginyl-tRNA(Asn) + AMP + diphosphate + H(+). The polypeptide is Asparagine--tRNA ligase (Pectobacterium atrosepticum (strain SCRI 1043 / ATCC BAA-672) (Erwinia carotovora subsp. atroseptica)).